The chain runs to 728 residues: Catalase-peroxidase 1 (728 aa).

Residues 1–22 form the signal peptide; that stretch reads MDKTQSSQGKCPVMHGANSAVA. A cross-link (tryptophyl-tyrosyl-methioninium (Trp-Tyr) (with M-251)) is located at residues 97–225; that stretch reads WHSAGTYRVA…LAAVMMGLIY (129 aa). Histidine 98 serves as the catalytic Proton acceptor. The segment at residues 225 to 251 is a cross-link (tryptophyl-tyrosyl-methioninium (Tyr-Met) (with W-97)); that stretch reads YVNPEGVDGKPDPLRTAQDVRVTFARM. Position 266 (histidine 266) interacts with heme b.

It belongs to the peroxidase family. Peroxidase/catalase subfamily. Homodimer or homotetramer. It depends on heme b as a cofactor. Formation of the three residue Trp-Tyr-Met cross-link is important for the catalase, but not the peroxidase activity of the enzyme.

It catalyses the reaction H2O2 + AH2 = A + 2 H2O. It carries out the reaction 2 H2O2 = O2 + 2 H2O. In terms of biological role, bifunctional enzyme with both catalase and broad-spectrum peroxidase activity. This is Catalase-peroxidase 1 from Shewanella sp. (strain ANA-3).